Reading from the N-terminus, the 426-residue chain is Phosphomethylpyrimidine synthase (426 aa).

Residues N65, M94, Y123, H162, 184 to 186 (SRG), 225 to 228 (DGMR), and E264 contribute to the substrate site. Zn(2+) is bound at residue H268. Y291 contributes to the substrate binding site. H332 serves as a coordination point for Zn(2+). 3 residues coordinate [4Fe-4S] cluster: C408, C411, and C415.

This sequence belongs to the ThiC family. It depends on [4Fe-4S] cluster as a cofactor.

It carries out the reaction 5-amino-1-(5-phospho-beta-D-ribosyl)imidazole + S-adenosyl-L-methionine = 4-amino-2-methyl-5-(phosphooxymethyl)pyrimidine + CO + 5'-deoxyadenosine + formate + L-methionine + 3 H(+). It participates in cofactor biosynthesis; thiamine diphosphate biosynthesis. Its function is as follows. Catalyzes the synthesis of the hydroxymethylpyrimidine phosphate (HMP-P) moiety of thiamine from aminoimidazole ribotide (AIR) in a radical S-adenosyl-L-methionine (SAM)-dependent reaction. The polypeptide is Phosphomethylpyrimidine synthase (Methanocaldococcus jannaschii (strain ATCC 43067 / DSM 2661 / JAL-1 / JCM 10045 / NBRC 100440) (Methanococcus jannaschii)).